The chain runs to 319 residues: Malate dehydrogenase (319 aa).

NAD(+)-binding positions include 10-15 (GSGNIG) and aspartate 34. Arginine 83 and arginine 89 together coordinate substrate. NAD(+)-binding positions include asparagine 96 and 119–121 (ITN). Residues asparagine 121 and arginine 152 each coordinate substrate. The Proton acceptor role is filled by histidine 176.

The protein belongs to the LDH/MDH superfamily. MDH type 3 family.

It carries out the reaction (S)-malate + NAD(+) = oxaloacetate + NADH + H(+). Its function is as follows. Catalyzes the reversible oxidation of malate to oxaloacetate. The sequence is that of Malate dehydrogenase from Paramagnetospirillum magneticum (strain ATCC 700264 / AMB-1) (Magnetospirillum magneticum).